We begin with the raw amino-acid sequence, 505 residues long: ATP synthase subunit alpha (505 aa).

Residue 170-177 coordinates ATP; it reads GDRQTGKT.

It belongs to the ATPase alpha/beta chains family. In terms of assembly, F-type ATPases have 2 components, CF(1) - the catalytic core - and CF(0) - the membrane proton channel. CF(1) has five subunits: alpha(3), beta(3), gamma(1), delta(1), epsilon(1). CF(0) has four main subunits: a(1), b(1), b'(1) and c(9-12).

The protein resides in the cellular thylakoid membrane. It catalyses the reaction ATP + H2O + 4 H(+)(in) = ADP + phosphate + 5 H(+)(out). Functionally, produces ATP from ADP in the presence of a proton gradient across the membrane. The alpha chain is a regulatory subunit. In Prochlorococcus marinus subsp. pastoris (strain CCMP1986 / NIES-2087 / MED4), this protein is ATP synthase subunit alpha.